Consider the following 293-residue polypeptide: Probable endonuclease 4 (293 aa).

9 residues coordinate Zn(2+): histidine 75, histidine 115, glutamate 153, aspartate 187, histidine 190, histidine 224, aspartate 237, histidine 239, and glutamate 269.

This sequence belongs to the AP endonuclease 2 family. It depends on Zn(2+) as a cofactor.

It carries out the reaction Endonucleolytic cleavage to 5'-phosphooligonucleotide end-products.. In terms of biological role, endonuclease IV plays a role in DNA repair. It cleaves phosphodiester bonds at apurinic or apyrimidinic (AP) sites, generating a 3'-hydroxyl group and a 5'-terminal sugar phosphate. The protein is Probable endonuclease 4 of Chlamydia pneumoniae (Chlamydophila pneumoniae).